We begin with the raw amino-acid sequence, 95 residues long: UPF0213 protein YPK_3712 (95 aa).

In terms of domain architecture, GIY-YIG spans 4 to 79; it reads SLWHLYLLRT…KQLSKQQKEK (76 aa).

The protein belongs to the UPF0213 family.

This Yersinia pseudotuberculosis serotype O:3 (strain YPIII) protein is UPF0213 protein YPK_3712.